The sequence spans 252 residues: tRNA-cytidine(32) 2-sulfurtransferase (252 aa).

Positions 37–42 match the PP-loop motif motif; it reads SGGKDS. Positions 112, 115, and 202 each coordinate [4Fe-4S] cluster.

It belongs to the TtcA family. Homodimer. The cofactor is Mg(2+). [4Fe-4S] cluster serves as cofactor.

It localises to the cytoplasm. The enzyme catalyses cytidine(32) in tRNA + S-sulfanyl-L-cysteinyl-[cysteine desulfurase] + AH2 + ATP = 2-thiocytidine(32) in tRNA + L-cysteinyl-[cysteine desulfurase] + A + AMP + diphosphate + H(+). Its pathway is tRNA modification. Functionally, catalyzes the ATP-dependent 2-thiolation of cytidine in position 32 of tRNA, to form 2-thiocytidine (s(2)C32). The sulfur atoms are provided by the cysteine/cysteine desulfurase (IscS) system. The sequence is that of tRNA-cytidine(32) 2-sulfurtransferase from Geotalea uraniireducens (strain Rf4) (Geobacter uraniireducens).